Here is a 293-residue protein sequence, read N- to C-terminus: Pyridoxal 5'-phosphate synthase subunit PdxS (293 aa).

Asp25 contacts D-ribose 5-phosphate. The active-site Schiff-base intermediate with D-ribose 5-phosphate is the Lys82. Residue Gly154 coordinates D-ribose 5-phosphate. Arg166 lines the D-glyceraldehyde 3-phosphate pocket. D-ribose 5-phosphate contacts are provided by residues Gly215 and 236-237; that span reads GS.

It belongs to the PdxS/SNZ family. As to quaternary structure, in the presence of PdxT, forms a dodecamer of heterodimers.

It catalyses the reaction aldehydo-D-ribose 5-phosphate + D-glyceraldehyde 3-phosphate + L-glutamine = pyridoxal 5'-phosphate + L-glutamate + phosphate + 3 H2O + H(+). Its pathway is cofactor biosynthesis; pyridoxal 5'-phosphate biosynthesis. Functionally, catalyzes the formation of pyridoxal 5'-phosphate from ribose 5-phosphate (RBP), glyceraldehyde 3-phosphate (G3P) and ammonia. The ammonia is provided by the PdxT subunit. Can also use ribulose 5-phosphate and dihydroxyacetone phosphate as substrates, resulting from enzyme-catalyzed isomerization of RBP and G3P, respectively. The chain is Pyridoxal 5'-phosphate synthase subunit PdxS from Thermotoga petrophila (strain ATCC BAA-488 / DSM 13995 / JCM 10881 / RKU-1).